The following is a 299-amino-acid chain: tRNA dimethylallyltransferase (299 aa).

13-20 (GPTASGKT) is an ATP binding site. Position 15-20 (15-20 (TASGKT)) interacts with substrate. Residues 38–41 (DSRQ) are interaction with substrate tRNA.

This sequence belongs to the IPP transferase family. Monomer. It depends on Mg(2+) as a cofactor.

It carries out the reaction adenosine(37) in tRNA + dimethylallyl diphosphate = N(6)-dimethylallyladenosine(37) in tRNA + diphosphate. Functionally, catalyzes the transfer of a dimethylallyl group onto the adenine at position 37 in tRNAs that read codons beginning with uridine, leading to the formation of N6-(dimethylallyl)adenosine (i(6)A). The sequence is that of tRNA dimethylallyltransferase from Prochlorococcus marinus (strain MIT 9301).